Here is a 2190-residue protein sequence, read N- to C-terminus: Integrator complex subunit 1 (2190 aa).

The tract at residues methionine 1–alanine 61 is disordered. Serine 13 carries the phosphoserine modification. The span at glycine 34 to threonine 44 shows a compositional bias: polar residues. Lysine 47 carries the N6-acetyllysine modification. Threonine 83 carries the phosphothreonine modification. Residues serine 87, serine 307, and serine 924 each carry the phosphoserine modification. A disordered region spans residues alanine 922–glutamine 945. Positions alanine 923–glutamate 932 are enriched in acidic residues. Residues threonine 1159–proline 1179 traverse the membrane as a helical segment. Residues serine 1311 to glutamine 1334 form a disordered region. Over residues proline 1314–lysine 1323 the composition is skewed to basic and acidic residues. Residues serine 1318, serine 1326, serine 1327, and serine 1395 each carry the phosphoserine modification.

This sequence belongs to the Integrator subunit 1 family. In terms of assembly, component of the Integrator complex, composed of core subunits INTS1, INTS2, INTS3, INTS4, INTS5, INTS6, INTS7, INTS8, INTS9/RC74, INTS10, INTS11/CPSF3L, INTS12, INTS13, INTS14 and INTS15. The core complex associates with protein phosphatase 2A subunits PPP2CA and PPP2R1A, to form the Integrator-PP2A (INTAC) complex. Interacts with ESRRB, ESRRB is not a core component of the Integrator complex and this association is a bridge for the interaction with the multiprotein complex Integrator; attracts the transcriptional machinery.

The protein resides in the nucleus. It localises to the nucleus membrane. In terms of biological role, component of the integrator complex, a multiprotein complex that terminates RNA polymerase II (Pol II) transcription in the promoter-proximal region of genes. The integrator complex provides a quality checkpoint during transcription elongation by driving premature transcription termination of transcripts that are unfavorably configured for transcriptional elongation: the complex terminates transcription by (1) catalyzing dephosphorylation of the C-terminal domain (CTD) of Pol II subunit POLR2A/RPB1 and SUPT5H/SPT5, (2) degrading the exiting nascent RNA transcript via endonuclease activity and (3) promoting the release of Pol II from bound DNA. The integrator complex is also involved in terminating the synthesis of non-coding Pol II transcripts, such as enhancer RNAs (eRNAs), small nuclear RNAs (snRNAs), telomerase RNAs and long non-coding RNAs (lncRNAs). Within the integrator complex, INTS1 is involved in the post-termination step: INTS1 displaces INTS3 and the SOSS factors, allowing the integrator complex to return to the closed conformation, ready to bind to the paused elongation complex for another termination cycle. Mediates recruitment of cytoplasmic dynein to the nuclear envelope, probably as component of the integrator complex. In Homo sapiens (Human), this protein is Integrator complex subunit 1.